Here is a 564-residue protein sequence, read N- to C-terminus: 4-coumarate--CoA ligase 1 (564 aa).

Residues S209, S210, G211, T212, T213, and K217 each contribute to the ATP site. 2 residues coordinate (E)-4-coumaroyl-AMP: Y259 and T263. CoA is bound at residue R280. The SBD1 stretch occupies residues 282-351 (DLAAMMDLVE…AKLPGAVLGQ (70 aa)). (E)-4-coumaroyl-AMP contacts are provided by A329, Q351, G352, T356, and M364. Residues Q351, G352, and T356 each coordinate ATP. Residues 352–419 (GYGMTEAGPV…IRGQQIMKGY (68 aa)) are SBD2. ATP is bound by residues D440 and R455. (E)-4-coumaroyl-AMP is bound by residues K457 and K461. CoA contacts are provided by R463 and G464. K547 contributes to the ATP binding site.

Belongs to the ATP-dependent AMP-binding enzyme family. The cofactor is Mg(2+). As to expression, expressed in roots, stems, leaf blades and leaf sheaths.

It carries out the reaction (E)-ferulate + ATP + CoA = (E)-feruloyl-CoA + AMP + diphosphate. It catalyses the reaction (E)-4-coumarate + ATP + CoA = (E)-4-coumaroyl-CoA + AMP + diphosphate. The enzyme catalyses (E)-cinnamate + ATP + CoA = (E)-cinnamoyl-CoA + AMP + diphosphate. The catalysed reaction is (E)-caffeate + ATP + CoA = (E)-caffeoyl-CoA + AMP + diphosphate. It carries out the reaction (E)-ferulate + ATP + H(+) = (E)-feruloyl-AMP + diphosphate. It catalyses the reaction (E)-feruloyl-AMP + CoA = (E)-feruloyl-CoA + AMP + H(+). The enzyme catalyses (E)-4-coumarate + ATP + H(+) = (E)-4-coumaroyl-AMP + diphosphate. The catalysed reaction is (E)-4-coumaroyl-AMP + CoA = (E)-4-coumaroyl-CoA + AMP + H(+). It carries out the reaction (E)-caffeate + ATP + H(+) = (E)-caffeoyl-AMP + diphosphate. It catalyses the reaction (E)-caffeoyl-AMP + CoA = (E)-caffeoyl-CoA + AMP + H(+). It participates in phytoalexin biosynthesis; 3,4',5-trihydroxystilbene biosynthesis; 3,4',5-trihydroxystilbene from trans-4-coumarate: step 1/2. Functionally, involved in the phenylpropanoid metabolism by mediating the activation of a number of hydroxycinnamates for the biosynthesis of monolignols and other phenolic secondary metabolites. Catalyzes the formation of CoA esters of cinnamate, 4-coumarate, caffeate and ferulate. Is more efficient with substrates in the following order: ferulate &gt; 4-coumarate &gt; cinnamate &gt; caffeate. Cannot convert sinapate to its corresponding CoA ester. Follows a two-step reaction mechanism, wherein the carboxylate substrate first undergoes adenylation by ATP, followed by a thioesterification in the presence of CoA to yield the final CoA thioester. The sequence is that of 4-coumarate--CoA ligase 1 from Oryza sativa subsp. japonica (Rice).